Here is a 166-residue protein sequence, read N- to C-terminus: CDP-archaeol synthase (166 aa).

4 consecutive transmembrane segments (helical) span residues 39–59 (IRGF…QMYA), 61–81 (ISGL…LLAI), 104–124 (EWFL…TLLF), and 127–147 (IWML…LTPL).

This sequence belongs to the CDP-archaeol synthase family. It depends on Mg(2+) as a cofactor.

The protein localises to the cell membrane. The enzyme catalyses 2,3-bis-O-(geranylgeranyl)-sn-glycerol 1-phosphate + CTP + H(+) = CDP-2,3-bis-O-(geranylgeranyl)-sn-glycerol + diphosphate. Its pathway is membrane lipid metabolism; glycerophospholipid metabolism. Functionally, catalyzes the formation of CDP-2,3-bis-(O-geranylgeranyl)-sn-glycerol (CDP-archaeol) from 2,3-bis-(O-geranylgeranyl)-sn-glycerol 1-phosphate (DGGGP) and CTP. This reaction is the third ether-bond-formation step in the biosynthesis of archaeal membrane lipids. This Methanospirillum hungatei JF-1 (strain ATCC 27890 / DSM 864 / NBRC 100397 / JF-1) protein is CDP-archaeol synthase.